The chain runs to 492 residues: G2/mitotic-specific cyclin CLB2 (492 aa).

The disordered stretch occupies residues 1–176 (MPQVTKTNNE…QPEVGERSQS (176 aa)). Residues 23 to 33 (QESISTIKNTT) show a composition bias toward polar residues. The segment covering 34–58 (ISNSQHKQQTQQQISSPPQVSVTSS) has biased composition (low complexity). Residues 59 to 83 (EGVSHVNTRQYLGDVSNQYITNAKP) are compositionally biased toward polar residues. Low complexity predominate over residues 111 to 135 (ASDNNNNGSTSSSSNSSNNNNNDAN). The 127-residue stretch at 208–334 (EIFSYYYELE…MLTILNFDLN (127 aa)) folds into the Cyclin N-terminal domain.

It belongs to the cyclin family. Cyclin AB subfamily.

In terms of biological role, 2/mitotic-specific cyclin essential for the control of the cell cycle at the G2/M (mitosis) transition. G2/M cyclins accumulate steadily during G2 and are abruptly destroyed at mitosis. Degradation is necessary for the cell to exit from mitosis. Plays a role in morphogenesis by negatively regulating polarized growth. Through binding to CDC28 regulates cytokinesis, partly by phosphorylation of the actomyosin ring component IQG1. Also involved in the phosphorylation of CDC6 and CDC54. In Candida albicans (strain SC5314 / ATCC MYA-2876) (Yeast), this protein is G2/mitotic-specific cyclin CLB2 (CLB2).